Here is a 429-residue protein sequence, read N- to C-terminus: Adenylosuccinate synthetase (429 aa).

GTP-binding positions include 12–18 and 40–42; these read GDEGKGK and GHT. The active-site Proton acceptor is the Asp13. Mg(2+) contacts are provided by Asp13 and Gly40. Residues 13–16, 38–41, Thr129, Arg143, Gln223, Thr238, and Arg302 contribute to the IMP site; these read DEGK and NAGH. Residue His41 is the Proton donor of the active site. 298–304 is a binding site for substrate; that stretch reads TVTGRPR. GTP-binding positions include Arg304, 330–332, and 412–414; these read KLD and STS.

This sequence belongs to the adenylosuccinate synthetase family. As to quaternary structure, homodimer. The cofactor is Mg(2+).

It localises to the cytoplasm. It carries out the reaction IMP + L-aspartate + GTP = N(6)-(1,2-dicarboxyethyl)-AMP + GDP + phosphate + 2 H(+). Its pathway is purine metabolism; AMP biosynthesis via de novo pathway; AMP from IMP: step 1/2. Its function is as follows. Plays an important role in the de novo pathway of purine nucleotide biosynthesis. Catalyzes the first committed step in the biosynthesis of AMP from IMP. The chain is Adenylosuccinate synthetase from Paramagnetospirillum magneticum (strain ATCC 700264 / AMB-1) (Magnetospirillum magneticum).